Reading from the N-terminus, the 494-residue chain is Guanosine-5'-triphosphate,3'-diphosphate pyrophosphatase (494 aa).

Belongs to the GppA/Ppx family. GppA subfamily.

The enzyme catalyses guanosine 3'-diphosphate 5'-triphosphate + H2O = guanosine 3',5'-bis(diphosphate) + phosphate + H(+). It participates in purine metabolism; ppGpp biosynthesis; ppGpp from GTP: step 2/2. In terms of biological role, catalyzes the conversion of pppGpp to ppGpp. Guanosine pentaphosphate (pppGpp) is a cytoplasmic signaling molecule which together with ppGpp controls the 'stringent response', an adaptive process that allows bacteria to respond to amino acid starvation, resulting in the coordinated regulation of numerous cellular activities. This Escherichia coli O139:H28 (strain E24377A / ETEC) protein is Guanosine-5'-triphosphate,3'-diphosphate pyrophosphatase.